A 113-amino-acid polypeptide reads, in one-letter code: Large ribosomal subunit protein bL19 (113 aa).

The protein belongs to the bacterial ribosomal protein bL19 family.

This protein is located at the 30S-50S ribosomal subunit interface and may play a role in the structure and function of the aminoacyl-tRNA binding site. This chain is Large ribosomal subunit protein bL19, found in Corynebacterium diphtheriae (strain ATCC 700971 / NCTC 13129 / Biotype gravis).